The sequence spans 397 residues: 1-deoxy-D-xylulose 5-phosphate reductoisomerase (397 aa).

The NADPH site is built by threonine 12, glycine 13, serine 14, isoleucine 15, glycine 38, lysine 39, asparagine 40, and asparagine 126. Lysine 127 serves as a coordination point for 1-deoxy-D-xylulose 5-phosphate. Glutamate 128 contributes to the NADPH binding site. Aspartate 152 lines the Mn(2+) pocket. 4 residues coordinate 1-deoxy-D-xylulose 5-phosphate: serine 153, glutamate 154, serine 188, and histidine 211. Glutamate 154 serves as a coordination point for Mn(2+). Glycine 217 lines the NADPH pocket. 1-deoxy-D-xylulose 5-phosphate is bound by residues serine 224, asparagine 229, lysine 230, and glutamate 233. Glutamate 233 contributes to the Mn(2+) binding site.

Belongs to the DXR family. It depends on Mg(2+) as a cofactor. Mn(2+) is required as a cofactor.

It carries out the reaction 2-C-methyl-D-erythritol 4-phosphate + NADP(+) = 1-deoxy-D-xylulose 5-phosphate + NADPH + H(+). It participates in isoprenoid biosynthesis; isopentenyl diphosphate biosynthesis via DXP pathway; isopentenyl diphosphate from 1-deoxy-D-xylulose 5-phosphate: step 1/6. Its function is as follows. Catalyzes the NADPH-dependent rearrangement and reduction of 1-deoxy-D-xylulose-5-phosphate (DXP) to 2-C-methyl-D-erythritol 4-phosphate (MEP). In Haemophilus influenzae (strain ATCC 51907 / DSM 11121 / KW20 / Rd), this protein is 1-deoxy-D-xylulose 5-phosphate reductoisomerase.